The chain runs to 212 residues: Peptide methionine sulfoxide reductase MsrA (212 aa).

The active site involves Cys-52.

Belongs to the MsrA Met sulfoxide reductase family.

The catalysed reaction is L-methionyl-[protein] + [thioredoxin]-disulfide + H2O = L-methionyl-(S)-S-oxide-[protein] + [thioredoxin]-dithiol. The enzyme catalyses [thioredoxin]-disulfide + L-methionine + H2O = L-methionine (S)-S-oxide + [thioredoxin]-dithiol. Functionally, has an important function as a repair enzyme for proteins that have been inactivated by oxidation. Catalyzes the reversible oxidation-reduction of methionine sulfoxide in proteins to methionine. This Escherichia coli (strain SMS-3-5 / SECEC) protein is Peptide methionine sulfoxide reductase MsrA.